We begin with the raw amino-acid sequence, 83 residues long: Small ribosomal subunit protein eS21 (83 aa).

At Met1 the chain carries N-acetylmethionine. N6-acetyllysine is present on Lys81.

This sequence belongs to the eukaryotic ribosomal protein eS21 family. Component of the 40S small ribosomal subunit.

The protein resides in the cytoplasm. Its subcellular location is the cytosol. It localises to the rough endoplasmic reticulum. Component of the small ribosomal subunit. The ribosome is a large ribonucleoprotein complex responsible for the synthesis of proteins in the cell. The protein is Small ribosomal subunit protein eS21 (Rps21) of Mus musculus (Mouse).